Here is a 618-residue protein sequence, read N- to C-terminus: Proline--tRNA ligase (618 aa).

It belongs to the class-II aminoacyl-tRNA synthetase family. ProS type 1 subfamily. In terms of assembly, homodimer.

The protein localises to the cytoplasm. It catalyses the reaction tRNA(Pro) + L-proline + ATP = L-prolyl-tRNA(Pro) + AMP + diphosphate. Functionally, catalyzes the attachment of proline to tRNA(Pro) in a two-step reaction: proline is first activated by ATP to form Pro-AMP and then transferred to the acceptor end of tRNA(Pro). As ProRS can inadvertently accommodate and process non-cognate amino acids such as alanine and cysteine, to avoid such errors it has two additional distinct editing activities against alanine. One activity is designated as 'pretransfer' editing and involves the tRNA(Pro)-independent hydrolysis of activated Ala-AMP. The other activity is designated 'posttransfer' editing and involves deacylation of mischarged Ala-tRNA(Pro). The misacylated Cys-tRNA(Pro) is not edited by ProRS. The protein is Proline--tRNA ligase of Streptococcus equi subsp. zooepidemicus (strain H70).